A 130-amino-acid chain; its full sequence is Albumin-1 E (130 aa).

The N-terminal stretch at 1–26 is a signal peptide; the sequence is MASVKLASLIVLFATLGMFLTKNVGA. 3 disulfides stabilise this stretch: Cys-29–Cys-46, Cys-33–Cys-48, and Cys-41–Cys-58. 2 propeptides span residues 64–69 and 123–130; these read VFLKGN and LLKSVSTA.

In terms of processing, the C-terminal glycine may be removed from PA1b.

Functionally, PA1b binds to basic 7S globulin (BG) and stimulates its phosphorylation activity. Involved in the signal transduction system to regulate the growth and differentiation as a hormone peptide. Toxic to various insects through binding to a high affinity binding site in the insect gut. The chain is Albumin-1 E from Pisum sativum (Garden pea).